Consider the following 34-residue polypeptide: uncharacterized protein (34 aa).

The chain crosses the membrane as a helical span at residues 10–30; that stretch reads LIITSSFFAIAVVLVLSVLLI.

It is found in the membrane. This is an uncharacterized protein from Escherichia coli O157:H7.